The following is an 884-amino-acid chain: MTIDKTFDPAAIESRWYTHWEEEGLFHPERPGADPFTLVIPPPNVTGSLHIGHALDDTLQDILVRHARLKGKDALWVVGTDHAGIATQMVVERNLAKIGQKRTDMDRETFVNKVWEWKAESGGTITRQLRRLGASCDWAHERFTMDEGFSKAVIKVFVSLYNEGLIYRDKRLVNWDPHLGTAISDLEVENREVQGHFWHFRYPLEDGSGEIIVATTRPETMLADMAVAVNPEDDRYKALIGKNIRLPITNRLIPIIADIHADPELGSGAVKITPGHDFNDFEVGKRAGIKPADMLNMLDSHARVIQTAENDVPEELIGLDRFEARQIIVEKIDALGLLDKIEDRVIQAPYGDRSGVPIEPWLTDQWYVDAEKLAQPALEAVRSGKIKIIPESWTKTYYNWLENIQPWCISRQLWWGHQIPVWYTDDGQAIVAENEESAQEKAGQGVNLRRDPDVLDTWFSSALWPFATLGWPDTDPKALGRYPNDVLISGFDILFFWDARMIMQGLHFMKDVPFPKLYLHGLVRAADGSKMSKSKGNTVDPLGLIDKYGADALRFTLCAMESQGRDIKLDEKRVEGYRNFATKLWNAVRFAQNNNCAVNTSKQPPEATLTTNRWIIAETAKVARALDQHIEDMRYDELANSLYHFVWNDFCDWYLELIKPILTSTEDQNQGELQETLAVLGWVIDQILIMLHPIMPFITEELWHALGDRDHDLIVAAWPDYKNWSVDETAQNDIDWLIRLITAIRATRSELNVPPALKVPLHSHGIPEKAAHNLERFDPFIKRLARIESIHKEAAPKGAAAQIVVDEATFVLPLEGVIDLDAERGRLKKAIEAVEKEKTATEKRLGNPNFVARAKAEVVAENRERLNNFTGEITKLKAALERLM.

The 'HIGH' region motif lies at 43 to 53 (PNVTGSLHIGH). The short motif at 530–534 (KMSKS) is the 'KMSKS' region element. Lys533 contributes to the ATP binding site. The stretch at 817 to 884 (VIDLDAERGR…KLKAALERLM (68 aa)) forms a coiled coil.

Belongs to the class-I aminoacyl-tRNA synthetase family. ValS type 1 subfamily. In terms of assembly, monomer.

The protein resides in the cytoplasm. The catalysed reaction is tRNA(Val) + L-valine + ATP = L-valyl-tRNA(Val) + AMP + diphosphate. Catalyzes the attachment of valine to tRNA(Val). As ValRS can inadvertently accommodate and process structurally similar amino acids such as threonine, to avoid such errors, it has a 'posttransfer' editing activity that hydrolyzes mischarged Thr-tRNA(Val) in a tRNA-dependent manner. The chain is Valine--tRNA ligase from Zymomonas mobilis subsp. mobilis (strain ATCC 31821 / ZM4 / CP4).